Consider the following 505-residue polypeptide: ATP synthase subunit alpha, chloroplastic (505 aa).

170 to 177 contributes to the ATP binding site; that stretch reads GDRQTGKT.

This sequence belongs to the ATPase alpha/beta chains family. F-type ATPases have 2 components, CF(1) - the catalytic core - and CF(0) - the membrane proton channel. CF(1) has five subunits: alpha(3), beta(3), gamma(1), delta(1), epsilon(1). CF(0) has four main subunits: a, b, b' and c.

It localises to the plastid. The protein localises to the chloroplast thylakoid membrane. It carries out the reaction ATP + H2O + 4 H(+)(in) = ADP + phosphate + 5 H(+)(out). Functionally, produces ATP from ADP in the presence of a proton gradient across the membrane. The alpha chain is a regulatory subunit. This chain is ATP synthase subunit alpha, chloroplastic, found in Mesostigma viride (Green alga).